Consider the following 111-residue polypeptide: Cornifelin homolog B (111 aa).

Belongs to the cornifelin family.

The polypeptide is Cornifelin homolog B (cnfn-b) (Xenopus laevis (African clawed frog)).